Consider the following 95-residue polypeptide: MLKSNNTSETAAHKVGDKTAKKVFFRRRKGCPLSVPNAPVIDYKNPELLIKFVSEGGRMLPSRITNVCAKKQRKLNNAIKIARILALLPFVFQAK.

The protein belongs to the bacterial ribosomal protein bS18 family. In terms of assembly, part of the 30S ribosomal subunit. Forms a tight heterodimer with protein bS6.

In terms of biological role, binds as a heterodimer with protein bS6 to the central domain of the 16S rRNA, where it helps stabilize the platform of the 30S subunit. This chain is Small ribosomal subunit protein bS18, found in Rickettsia africae (strain ESF-5).